Consider the following 593-residue polypeptide: NADH-quinone oxidoreductase subunit C/D (593 aa).

The NADH dehydrogenase I subunit C stretch occupies residues 1–184; the sequence is MTADSVLSIP…DPYSLSAAKQ (184 aa). Residues 208-593 form an NADH dehydrogenase I subunit D region; sequence DFMFLNLGPN…IDFVMADVDR (386 aa).

The protein in the N-terminal section; belongs to the complex I 30 kDa subunit family. In the C-terminal section; belongs to the complex I 49 kDa subunit family. As to quaternary structure, NDH-1 is composed of 13 different subunits. Subunits NuoB, CD, E, F, and G constitute the peripheral sector of the complex.

The protein resides in the cell inner membrane. It catalyses the reaction a quinone + NADH + 5 H(+)(in) = a quinol + NAD(+) + 4 H(+)(out). Functionally, NDH-1 shuttles electrons from NADH, via FMN and iron-sulfur (Fe-S) centers, to quinones in the respiratory chain. The immediate electron acceptor for the enzyme in this species is believed to be ubiquinone. Couples the redox reaction to proton translocation (for every two electrons transferred, four hydrogen ions are translocated across the cytoplasmic membrane), and thus conserves the redox energy in a proton gradient. The chain is NADH-quinone oxidoreductase subunit C/D from Azotobacter vinelandii (strain DJ / ATCC BAA-1303).